The chain runs to 74 residues: Delta-actitoxin-Amc3a (74 aa).

The signal sequence occupies residues 1-19; that stretch reads MNRLIILVVAAVFLGMASA. A propeptide spanning residues 20–24 is cleaved from the precursor; that stretch reads EEDVL. Pro29 carries the post-translational modification Hydroxyproline. 3 disulfide bridges follow: Cys30/Cys70, Cys32/Cys60, and Cys53/Cys71. The residue at position 73 (Gln73) is a Glutamine amide.

Belongs to the sea anemone sodium channel inhibitory toxin family. Type I subfamily.

It is found in the secreted. It localises to the nematocyst. In terms of biological role, inhibits voltage-gated sodium channels (Nav). The polypeptide is Delta-actitoxin-Amc3a (Antheopsis maculata (Sea anemone)).